We begin with the raw amino-acid sequence, 165 residues long: Transcriptional repressor NrdR (165 aa).

Residues 3 to 34 (CPFCGAQDTRVVDSRLSHEGDQVRRRRECGEC) fold into a zinc finger. One can recognise an ATP-cone domain in the interval 49 to 139 (PRVVKSDGSR…VYRRFEDVNQ (91 aa)).

The protein belongs to the NrdR family. Zn(2+) is required as a cofactor.

Negatively regulates transcription of bacterial ribonucleotide reductase nrd genes and operons by binding to NrdR-boxes. The polypeptide is Transcriptional repressor NrdR (Methylococcus capsulatus (strain ATCC 33009 / NCIMB 11132 / Bath)).